The primary structure comprises 526 residues: Glucose-6-phosphate isomerase (526 aa).

Glu-323 acts as the Proton donor in catalysis. Active-site residues include His-352 and Lys-454.

The protein belongs to the GPI family.

The protein localises to the cytoplasm. It carries out the reaction alpha-D-glucose 6-phosphate = beta-D-fructose 6-phosphate. It functions in the pathway carbohydrate biosynthesis; gluconeogenesis. The protein operates within carbohydrate degradation; glycolysis; D-glyceraldehyde 3-phosphate and glycerone phosphate from D-glucose: step 2/4. Catalyzes the reversible isomerization of glucose-6-phosphate to fructose-6-phosphate. The chain is Glucose-6-phosphate isomerase from Prochlorococcus marinus subsp. pastoris (strain CCMP1986 / NIES-2087 / MED4).